The chain runs to 92 residues: MARVTVEDAVKQIGNRFDMILVAARRARQIAVQGKDPMVEEQNDKPTVIALREIEKGLVNAGTLDADERQSVREREAAEIAAVAAIAEGRSL.

It belongs to the RNA polymerase subunit omega family. The RNAP catalytic core consists of 2 alpha, 1 beta, 1 beta' and 1 omega subunit. When a sigma factor is associated with the core the holoenzyme is formed, which can initiate transcription.

The enzyme catalyses RNA(n) + a ribonucleoside 5'-triphosphate = RNA(n+1) + diphosphate. Functionally, promotes RNA polymerase assembly. Latches the N- and C-terminal regions of the beta' subunit thereby facilitating its interaction with the beta and alpha subunits. This Shewanella amazonensis (strain ATCC BAA-1098 / SB2B) protein is DNA-directed RNA polymerase subunit omega.